A 256-amino-acid polypeptide reads, in one-letter code: 1-(5-phosphoribosyl)-5-[(5-phosphoribosylamino)methylideneamino] imidazole-4-carboxamide isomerase (256 aa).

Asp8 acts as the Proton acceptor in catalysis. Asp129 (proton donor) is an active-site residue.

Belongs to the HisA/HisF family.

Its subcellular location is the cytoplasm. It catalyses the reaction 1-(5-phospho-beta-D-ribosyl)-5-[(5-phospho-beta-D-ribosylamino)methylideneamino]imidazole-4-carboxamide = 5-[(5-phospho-1-deoxy-D-ribulos-1-ylimino)methylamino]-1-(5-phospho-beta-D-ribosyl)imidazole-4-carboxamide. The protein operates within amino-acid biosynthesis; L-histidine biosynthesis; L-histidine from 5-phospho-alpha-D-ribose 1-diphosphate: step 4/9. This is 1-(5-phosphoribosyl)-5-[(5-phosphoribosylamino)methylideneamino] imidazole-4-carboxamide isomerase from Picosynechococcus sp. (strain ATCC 27264 / PCC 7002 / PR-6) (Agmenellum quadruplicatum).